The following is a 350-amino-acid chain: Major allergen Mal f 1 (350 aa).

Positions 1 to 22 (MRYSTVLAALALLGTSAVSVLA) are cleaved as a signal peptide.

It localises to the secreted. The protein resides in the cell wall. The chain is Major allergen Mal f 1 from Malassezia furfur (Pityriasis versicolor infection agent).